A 225-amino-acid chain; its full sequence is tRNA (guanine-N(1)-)-methyltransferase (225 aa).

Residues glycine 112 and 132–137 (IGDYVL) each bind S-adenosyl-L-methionine.

It belongs to the RNA methyltransferase TrmD family. As to quaternary structure, homodimer.

It localises to the cytoplasm. The catalysed reaction is guanosine(37) in tRNA + S-adenosyl-L-methionine = N(1)-methylguanosine(37) in tRNA + S-adenosyl-L-homocysteine + H(+). Its function is as follows. Specifically methylates guanosine-37 in various tRNAs. The sequence is that of tRNA (guanine-N(1)-)-methyltransferase from Porphyromonas gingivalis (strain ATCC 33277 / DSM 20709 / CIP 103683 / JCM 12257 / NCTC 11834 / 2561).